The chain runs to 217 residues: MQIYLDTANLDEIRTAASWGVLSGVTTNPSLMAKEKGADFKATIQEIASLVDGPISAETTALDADGMVREGREFAAWHPNVVVKVPSTTEGLKAVSRLAREGIRCNVTLCFNAIQALLAARAGAFIISPFVGRVDDVGVDGMDLIREIVQIYRQHRITTLVLAASIRHPRHIVEAALAGADIATCPFKVLEQSMRHPLTDIGIERFLADWKAWQQGK.

Lys-84 functions as the Schiff-base intermediate with substrate in the catalytic mechanism.

Belongs to the transaldolase family. Type 3B subfamily.

It localises to the cytoplasm. It carries out the reaction D-sedoheptulose 7-phosphate + D-glyceraldehyde 3-phosphate = D-erythrose 4-phosphate + beta-D-fructose 6-phosphate. It functions in the pathway carbohydrate degradation; pentose phosphate pathway; D-glyceraldehyde 3-phosphate and beta-D-fructose 6-phosphate from D-ribose 5-phosphate and D-xylulose 5-phosphate (non-oxidative stage): step 2/3. Transaldolase is important for the balance of metabolites in the pentose-phosphate pathway. The polypeptide is Probable transaldolase (Roseiflexus sp. (strain RS-1)).